A 96-amino-acid polypeptide reads, in one-letter code: LQDAEDSSRFDADDTLAGEARELSTPKXHSEGTFSNDYSKYLETRRAQDFVQWLKNSXXXXXXXXHADGTFTSDVSSYLNDQAIKDFVAKLKSGKV.

Composition is skewed to basic and acidic residues over residues 1 to 12 (LQDAEDSSRFDA) and 19 to 30 (EARELSTPKXHS). Residues 1-35 (LQDAEDSSRFDADDTLAGEARELSTPKXHSEGTFS) are disordered.

The protein belongs to the glucagon family.

The protein localises to the secreted. Its function is as follows. Plays a key role in glucose metabolism and homeostasis. Regulates blood glucose by increasing gluconeogenesis and decreasing glycolysis. The chain is Pro-glucagon (gcg) from Myoxocephalus scorpius (Shorthorn sculpin).